The primary structure comprises 62 residues: uncharacterized protein (62 aa).

This is an uncharacterized protein from Escherichia coli (strain K12).